A 1137-amino-acid polypeptide reads, in one-letter code: Dendrite extension defective protein 1 (1137 aa).

A signal peptide spans 1-41 (MLAHTHRINKCLYGQNQMRNRHALLGALPPIFLLLLPLISC). Topologically, residues 43–1005 (KFDPERIAAR…HAEEQSPRLA (963 aa)) are extracellular. Positions 163-302 (PFWNRNDLRN…GEWMFELSEL (140 aa)) constitute an NIDO 1 domain. N-linked (GlcNAc...) asparagine glycans are attached at residues N240 and N416. The region spanning 409–450 (DVDECKTNSTICHKNAICTNTPGRYFCMCKEGFSGDGQNDCS) is the EGF-like; calcium-binding domain. 3 disulfide bridges follow: C413–C426, C420–C435, and C437–C449. The region spanning 519–659 (PFFGPIDLSR…GTWLYRIDKA (141 aa)) is the NIDO 2 domain. N-linked (GlcNAc...) asparagine glycosylation occurs at N571. A compositionally biased stretch (polar residues) spans 738 to 749 (IGNQQRQQTTKA). Disordered regions lie at residues 738-765 (IGNQQRQQTTKAVTRPRPNFSSTPHRPI), 795-856 (FRPN…PFEA), 878-897 (QTTKKQRPELSVTPQPEDLS), 906-933 (TEEDEEEAEISTETTTEMSSTTTTTKAH), and 978-998 (NSQPPKQRNDNQPTVNVGHAE). N-linked (GlcNAc...) asparagine glycosylation occurs at N756. The span at 798-809 (NQRNGVQKSTQR) shows a compositional bias: polar residues. The span at 819–833 (PLKEEATTSVPREKT) shows a compositional bias: basic and acidic residues. Positions 906-915 (TEEDEEEAEI) are enriched in acidic residues. Positions 916–933 (STETTTEMSSTTTTTKAH) are enriched in low complexity. Residues 978-992 (NSQPPKQRNDNQPTV) show a composition bias toward polar residues. A helical membrane pass occupies residues 1006-1026 (ILLPVMIILAWLVILVCIGAV). Over 1027-1037 (VCCKRRNSRES) the chain is Cytoplasmic. The segment at 1106-1125 (ARLSTQERQSPPSFVNNGYT) is disordered.

Post-translationally, may be proteolytically cleaved and secreted.

It localises to the membrane. The protein localises to the cell projection. Its subcellular location is the dendrite. It is found in the secreted. Along with dyf-7, enables neurite growth and maintenance by anchoring amphid dendritic tips during neuron cell body migration in embryonic and larval development. Promotes seam cell remodeling during the dauer phase. Plays a role in positively regulating locomotion during the dauer phase. The chain is Dendrite extension defective protein 1 from Caenorhabditis elegans.